Reading from the N-terminus, the 348-residue chain is Lipoyl synthase (348 aa).

[4Fe-4S] cluster-binding residues include Cys55, Cys60, Cys66, Cys81, Cys85, Cys88, and Ser292. One can recognise a Radical SAM core domain in the interval 67–281; it reads WESREATFLI…SDEAYEIGFA (215 aa).

This sequence belongs to the radical SAM superfamily. Lipoyl synthase family. Requires [4Fe-4S] cluster as cofactor.

It is found in the cytoplasm. It carries out the reaction [[Fe-S] cluster scaffold protein carrying a second [4Fe-4S](2+) cluster] + N(6)-octanoyl-L-lysyl-[protein] + 2 oxidized [2Fe-2S]-[ferredoxin] + 2 S-adenosyl-L-methionine + 4 H(+) = [[Fe-S] cluster scaffold protein] + N(6)-[(R)-dihydrolipoyl]-L-lysyl-[protein] + 4 Fe(3+) + 2 hydrogen sulfide + 2 5'-deoxyadenosine + 2 L-methionine + 2 reduced [2Fe-2S]-[ferredoxin]. The protein operates within protein modification; protein lipoylation via endogenous pathway; protein N(6)-(lipoyl)lysine from octanoyl-[acyl-carrier-protein]: step 2/2. Its function is as follows. Catalyzes the radical-mediated insertion of two sulfur atoms into the C-6 and C-8 positions of the octanoyl moiety bound to the lipoyl domains of lipoate-dependent enzymes, thereby converting the octanoylated domains into lipoylated derivatives. This is Lipoyl synthase from Corynebacterium efficiens (strain DSM 44549 / YS-314 / AJ 12310 / JCM 11189 / NBRC 100395).